A 233-amino-acid polypeptide reads, in one-letter code: Phosphoribosylaminoimidazole-succinocarboxamide synthase (233 aa).

It belongs to the SAICAR synthetase family.

The catalysed reaction is 5-amino-1-(5-phospho-D-ribosyl)imidazole-4-carboxylate + L-aspartate + ATP = (2S)-2-[5-amino-1-(5-phospho-beta-D-ribosyl)imidazole-4-carboxamido]succinate + ADP + phosphate + 2 H(+). Its pathway is purine metabolism; IMP biosynthesis via de novo pathway; 5-amino-1-(5-phospho-D-ribosyl)imidazole-4-carboxamide from 5-amino-1-(5-phospho-D-ribosyl)imidazole-4-carboxylate: step 1/2. This chain is Phosphoribosylaminoimidazole-succinocarboxamide synthase, found in Staphylococcus saprophyticus subsp. saprophyticus (strain ATCC 15305 / DSM 20229 / NCIMB 8711 / NCTC 7292 / S-41).